A 465-amino-acid polypeptide reads, in one-letter code: Purple acid phosphatase 2 (465 aa).

The N-terminal stretch at 1–32 is a signal peptide; it reads MGASRTGCYLLAVVLAAVMNAAIAGITSSFIR. 2 N-linked (GlcNAc...) asparagine glycosylation sites follow: asparagine 110 and asparagine 138. A Fe cation-binding site is contributed by aspartate 164. An N-linked (GlcNAc...) asparagine glycan is attached at asparagine 172. The Fe cation site is built by aspartate 193 and tyrosine 196. Aspartate 193 provides a ligand contact to Mn(2+). Asparagine 230 contacts Mn(2+). Asparagine 230 contacts substrate. Asparagine 303 carries N-linked (GlcNAc...) asparagine glycosylation. Histidine 315 is a Mn(2+) binding site. Histidine 325 (proton donor) is an active-site residue. Mn(2+) is bound at residue histidine 352. 352-354 contacts substrate; the sequence is HVH. A Fe cation-binding site is contributed by histidine 354. Asparagine 400 and asparagine 425 each carry an N-linked (GlcNAc...) asparagine glycan.

This sequence belongs to the metallophosphoesterase superfamily. Purple acid phosphatase family. As to quaternary structure, homodimer; disulfide-linked. Fe cation serves as cofactor. Requires Mn(2+) as cofactor. It depends on Zn(2+) as a cofactor. The cofactor is Cu(2+). Mg(2+) is required as a cofactor.

It localises to the secreted. The catalysed reaction is a phosphate monoester + H2O = an alcohol + phosphate. This chain is Purple acid phosphatase 2 (PAP2), found in Ipomoea batatas (Sweet potato).